Reading from the N-terminus, the 86-residue chain is Large ribosomal subunit protein bL31 (86 aa).

Positions Y65–S86 are disordered. Over residues S73–S86 the composition is skewed to basic and acidic residues.

It belongs to the bacterial ribosomal protein bL31 family. Type A subfamily. In terms of assembly, part of the 50S ribosomal subunit.

Functionally, binds the 23S rRNA. This Prochlorococcus marinus (strain NATL2A) protein is Large ribosomal subunit protein bL31.